Reading from the N-terminus, the 435-residue chain is Acetylcholine receptor-like protein cup-4 (435 aa).

The signal sequence occupies residues 1-24 (MRLLLIFTVIFVFYLAILKRDVNA). Asn-41, Asn-68, Asn-237, and Asn-249 each carry an N-linked (GlcNAc...) asparagine glycan. The next 2 helical transmembrane spans lie at 298–318 (VSFF…AIYL) and 341–361 (ITLF…HGVL). Asn-403 carries an N-linked (GlcNAc...) asparagine glycan. Residues 413–433 (PLAGLAMFVYFVIMFILYLVV) form a helical membrane-spanning segment.

Belongs to the ligand-gated ion channel (TC 1.A.9) family. Acetylcholine receptor (TC 1.A.9.1) subfamily.

The protein localises to the cytoplasmic vesicle membrane. In terms of biological role, thought to regulate endocytosis in coelomocytes through modulation of phospholipase C activity. Possible acetylcholine receptor. The protein is Acetylcholine receptor-like protein cup-4 of Caenorhabditis briggsae.